Reading from the N-terminus, the 359-residue chain is Hereditary hemochromatosis protein homolog (359 aa).

Positions 1–24 (MSLSAGLPVRPLLLLLLLLWSVAP) are cleaved as a signal peptide. Positions 25 to 126 (QALPPRSHSL…KVTKLGVVSE (102 aa)) are alpha-1. At 25-318 (QALPPRSHSL…WEPLQSQAMI (294 aa)) the chain is on the extracellular side. N-linked (GlcNAc...) asparagine glycans are attached at residues N114, N142, N166, and N246. The interval 127-217 (SHILQVVLGC…ELGRGVLGQQ (91 aa)) is alpha-2. 2 disulfides stabilise this stretch: C136–C199 and C237–C294. The alpha-3 stretch occupies residues 218–309 (VPTLVKVTRH…GLDQPLTASW (92 aa)). In terms of domain architecture, Ig-like C1-type spans 219–308 (PTLVKVTRHW…PGLDQPLTAS (90 aa)). The segment at 310-318 (EPLQSQAMI) is connecting peptide. Residues 319-339 (IGIISGVTVCAIFLVGILFLI) traverse the membrane as a helical segment. At 340–359 (LRKRKASGGTMGGYVLTDCE) the chain is on the cytoplasmic side.

It belongs to the MHC class I family. Binds TFR through the extracellular domain in a pH-dependent manner.

It is found in the cell membrane. In terms of biological role, binds to transferrin receptor (TFR) and reduces its affinity for iron-loaded transferrin. This is Hereditary hemochromatosis protein homolog (Hfe) from Mus musculus (Mouse).